The chain runs to 276 residues: Putative ABC transporter ATP-binding protein MA_4021 (276 aa).

The ABC transporter domain occupies 5-247 (FDLKNISYSY…DLNLLLSTNL (243 aa)). 38–45 (GSNGSGKS) serves as a coordination point for ATP.

It belongs to the ABC transporter superfamily.

The protein localises to the cell membrane. Its function is as follows. Probably part of an ABC transporter complex. Responsible for energy coupling to the transport system. The protein is Putative ABC transporter ATP-binding protein MA_4021 of Methanosarcina acetivorans (strain ATCC 35395 / DSM 2834 / JCM 12185 / C2A).